Reading from the N-terminus, the 217-residue chain is MEMFTVFLFYMFSLVLANQEERLPNKCEVCKLLTVELQDALDKTGRSKEVVELGEVLDTGKRRRKIKYNTSEMRLTEAMDNICERILQYKVHAERPGSLRYAKGTSQTMNTLKNLVEKGVKVELGVPYELWDEPTVEVAELKRQCETMLEEHEEVVEDWYFHHQDKGLERFFCEAHVLKDSDQECLTEIWKGDMGMKGSEEESEGKDGKETHDAGEL.

The first 27 residues, 1 to 27 (MEMFTVFLFYMFSLVLANQEERLPNKC), serve as a signal peptide directing secretion. Intrachain disulfides connect Cys-27–Cys-185, Cys-30–Cys-173, and Cys-83–Cys-145. The interval 194–217 (MGMKGSEEESEGKDGKETHDAGEL) is disordered. Basic and acidic residues predominate over residues 205 to 217 (GKDGKETHDAGEL).

This sequence belongs to the canopy family.

The protein localises to the secreted. This chain is Protein canopy 4 (cnpy4), found in Danio rerio (Zebrafish).